The following is a 196-amino-acid chain: Agamous-like MADS-box protein AGL70 (196 aa).

The MADS-box domain occupies Met1–Asp61. Positions Ile8 to Ser15 match the Nuclear localization signal motif. One can recognise a K-box domain in the interval Ala80–Leu170.

Mostly expressed in roots, leaves and flowers, and, to a lower extent, in inflorescence, siliques, pollen and shoots.

The protein localises to the nucleus. Probable transcription factor involved in the negative regulation of flowering time, probably through the photoperiodic and vernalization pathways; more efficient in cv. Landsberg erecta than in cv. Columbia background. Prevents premature flowering. Involved in the modulation of vernalization impact on flowering according to genotype acclimation to altitude. This is Agamous-like MADS-box protein AGL70 from Arabidopsis thaliana (Mouse-ear cress).